The sequence spans 275 residues: NH(3)-dependent NAD(+) synthetase (275 aa).

Glycine 43–serine 50 contributes to the ATP binding site. Residue aspartate 49 participates in Mg(2+) binding. Residue arginine 145 coordinates deamido-NAD(+). Residue threonine 165 coordinates ATP. Residue glutamate 170 coordinates Mg(2+). Positions 178 and 185 each coordinate deamido-NAD(+). Residues lysine 194 and threonine 216 each contribute to the ATP site. Histidine 265–lysine 266 contributes to the deamido-NAD(+) binding site.

It belongs to the NAD synthetase family. As to quaternary structure, homodimer.

It carries out the reaction deamido-NAD(+) + NH4(+) + ATP = AMP + diphosphate + NAD(+) + H(+). The protein operates within cofactor biosynthesis; NAD(+) biosynthesis; NAD(+) from deamido-NAD(+) (ammonia route): step 1/1. Functionally, catalyzes the ATP-dependent amidation of deamido-NAD to form NAD. Uses ammonia as a nitrogen source. This chain is NH(3)-dependent NAD(+) synthetase, found in Shewanella denitrificans (strain OS217 / ATCC BAA-1090 / DSM 15013).